Here is a 236-residue protein sequence, read N- to C-terminus: tRNA1(Val) (adenine(37)-N6)-methyltransferase (236 aa).

The protein belongs to the methyltransferase superfamily. tRNA (adenine-N(6)-)-methyltransferase family.

Its subcellular location is the cytoplasm. The enzyme catalyses adenosine(37) in tRNA1(Val) + S-adenosyl-L-methionine = N(6)-methyladenosine(37) in tRNA1(Val) + S-adenosyl-L-homocysteine + H(+). Functionally, specifically methylates the adenine in position 37 of tRNA(1)(Val) (anticodon cmo5UAC). The chain is tRNA1(Val) (adenine(37)-N6)-methyltransferase from Actinobacillus pleuropneumoniae serotype 7 (strain AP76).